A 279-amino-acid chain; its full sequence is tRNA pseudouridine synthase B (279 aa).

D38 serves as the catalytic Nucleophile.

The protein belongs to the pseudouridine synthase TruB family. Type 1 subfamily.

It carries out the reaction uridine(55) in tRNA = pseudouridine(55) in tRNA. In terms of biological role, responsible for synthesis of pseudouridine from uracil-55 in the psi GC loop of transfer RNAs. This is tRNA pseudouridine synthase B from Acholeplasma laidlawii (strain PG-8A).